A 99-amino-acid chain; its full sequence is Putative protein YgeP (99 aa).

The protein is Putative protein YgeP (ygeP) of Escherichia coli (strain K12).